A 289-amino-acid polypeptide reads, in one-letter code: Acetyl-coenzyme A carboxylase carboxyl transferase subunit beta (289 aa).

Residues Val28–Ser289 enclose the CoA carboxyltransferase N-terminal domain. Zn(2+) is bound by residues Cys32, Cys35, Cys51, and Cys54. The segment at Cys32–Cys54 adopts a C4-type zinc-finger fold.

It belongs to the AccD/PCCB family. As to quaternary structure, acetyl-CoA carboxylase is a heterohexamer composed of biotin carboxyl carrier protein (AccB), biotin carboxylase (AccC) and two subunits each of ACCase subunit alpha (AccA) and ACCase subunit beta (AccD). Requires Zn(2+) as cofactor.

Its subcellular location is the cytoplasm. It catalyses the reaction N(6)-carboxybiotinyl-L-lysyl-[protein] + acetyl-CoA = N(6)-biotinyl-L-lysyl-[protein] + malonyl-CoA. It participates in lipid metabolism; malonyl-CoA biosynthesis; malonyl-CoA from acetyl-CoA: step 1/1. Functionally, component of the acetyl coenzyme A carboxylase (ACC) complex. Biotin carboxylase (BC) catalyzes the carboxylation of biotin on its carrier protein (BCCP) and then the CO(2) group is transferred by the transcarboxylase to acetyl-CoA to form malonyl-CoA. The sequence is that of Acetyl-coenzyme A carboxylase carboxyl transferase subunit beta from Bacillus cereus (strain ATCC 10987 / NRS 248).